The following is a 383-amino-acid chain: tRNA (guanine-N(7)-)-methyltransferase non-catalytic subunit wuho (383 aa).

5 WD repeats span residues 61 to 101 (NLEV…ALLL), 105 to 144 (ALAR…APPK), 148 to 187 (GHLS…DIHS), 191 to 231 (GHKE…EVLQ), and 289 to 329 (AGSW…QAES).

The protein belongs to the WD repeat TRM82 family. As to quaternary structure, forms a heterodimer with the catalytic subunit Mettl1. Interacts with mei-P26 and weakly interacts with bgcn; required for the function or formation of the mei-P26-bgcn-bam-sxl complex. Interacts with nanos; may be involved in mei-P26-dependent derepression of the BMP signaling pathway. Interacts with Myc; the interaction may be mediated by mei-P26 and may be involved in the regulation of ribosome biogenesis. As to expression, in testis, it is present at high level in hub cells, a niche for germline stem cells of testis. Ubiquitously expressed in all testicular cells throughout spermatogenesis. Ubiquitously expressed in all germline and somatic cells of the ovary.

The protein localises to the nucleus. It is found in the cytoplasm. It functions in the pathway tRNA modification; N(7)-methylguanine-tRNA biosynthesis. In terms of biological role, required for the Mettl1-dependent formation of N(7)-methylguanine at position 46 (m7G46) in tRNA. In the Mettl1-wuho methyltransferase complex, it is required to stabilize and induce conformational changes of the catalytic subunit. Required for binding of nanos mRNA and repression of translation by the mei-P26-bgcn-bam-sxl complex. May cooperate with mei-P26 and nanos to derepress the BMP signaling pathway. May cooperate with mei-P26 to suppress expression of a subset of microRNAs. May cooperate with mei-P26 to regulate bam expression levels in germline cells during gametogenesis. Required to promote mitosis to meiosis transition during gametogenesis. May regulate germline cell division in part by regulating ribosome biogenesis. The chain is tRNA (guanine-N(7)-)-methyltransferase non-catalytic subunit wuho from Drosophila mojavensis (Fruit fly).